The chain runs to 60 residues: Large ribosomal subunit protein uL30 (60 aa).

The protein belongs to the universal ribosomal protein uL30 family. As to quaternary structure, part of the 50S ribosomal subunit.

The chain is Large ribosomal subunit protein uL30 from Paracidovorax citrulli (strain AAC00-1) (Acidovorax citrulli).